A 452-amino-acid chain; its full sequence is Probable receptor-like protein kinase At5g20050 (452 aa).

The signal sequence occupies residues 1–23 (MEDKKANIIATILILALVVVIIA). Residues 24 to 33 (ARVSLKLSKT) are Extracellular-facing. Residues 34–54 (FYLIAGVDISLILAVICFLII) traverse the membrane as a helical segment. Residues 55 to 452 (RSRYNKERKL…SSIISPISPR (398 aa)) lie on the Cytoplasmic side of the membrane. The Protein kinase domain occupies 103-392 (DGFRSLIGKG…MVIEMLEGRV (290 aa)). ATP contacts are provided by residues 109–117 (IGKGGSGSV) and K131. Residue Y178 is modified to Phosphotyrosine. The Proton acceptor role is filled by D236. Phosphothreonine occurs at positions 270 and 275.

This sequence belongs to the protein kinase superfamily. Ser/Thr protein kinase family.

Its subcellular location is the membrane. The catalysed reaction is L-seryl-[protein] + ATP = O-phospho-L-seryl-[protein] + ADP + H(+). It catalyses the reaction L-threonyl-[protein] + ATP = O-phospho-L-threonyl-[protein] + ADP + H(+). This is Probable receptor-like protein kinase At5g20050 from Arabidopsis thaliana (Mouse-ear cress).